A 336-amino-acid chain; its full sequence is Adenylosuccinate synthetase (336 aa).

GTP-binding positions include 12 to 18 (GDEGKGK) and 42 to 44 (GHS). The active-site Proton acceptor is Asp-13. Mg(2+)-binding residues include Asp-13 and Gly-42. IMP contacts are provided by residues 13–16 (DEGK), 40–43 (NAGH), Thr-127, Arg-141, Gln-179, Thr-194, and Arg-256. Catalysis depends on His-43, which acts as the Proton donor. 252-258 (TVTGRRR) serves as a coordination point for substrate. Residues Arg-258, 284–286 (CLD), and 324–326 (STG) each bind GTP.

It belongs to the adenylosuccinate synthetase family. In terms of assembly, homodimer. Requires Mg(2+) as cofactor.

The protein resides in the cytoplasm. The enzyme catalyses IMP + L-aspartate + GTP = N(6)-(1,2-dicarboxyethyl)-AMP + GDP + phosphate + 2 H(+). It functions in the pathway purine metabolism; AMP biosynthesis via de novo pathway; AMP from IMP: step 1/2. In terms of biological role, plays an important role in the de novo pathway of purine nucleotide biosynthesis. Catalyzes the first committed step in the biosynthesis of AMP from IMP. The polypeptide is Adenylosuccinate synthetase (Methanococcus aeolicus (strain ATCC BAA-1280 / DSM 17508 / OCM 812 / Nankai-3)).